A 20-amino-acid polypeptide reads, in one-letter code: Putative beta-neurotoxin (20 aa).

The 20-residue stretch at 1-20 (KDGYLVGSDGCKYSCLTRPG) folds into the LCN-type CS-alpha/beta domain.

In terms of tissue distribution, expressed by the venom gland.

The protein resides in the secreted. Its function is as follows. Beta toxins bind voltage-independently at site-4 of sodium channels (Nav) and shift the voltage of activation toward more negative potentials thereby affecting sodium channel activation and promoting spontaneous and repetitive firing. In Tityus pachyurus (Colombian scorpion), this protein is Putative beta-neurotoxin.